The chain runs to 529 residues: Transcription factor kayak (529 aa).

The segment covering 118 to 134 (LQGTDSDNSNASWADAQ) has biased composition (polar residues). Disordered regions lie at residues 118–166 (LQGT…SVNG) and 180–239 (NAGR…CRKR). 2 stretches are compositionally biased toward low complexity: residues 142-153 (TDTSSAHTDSTS) and 182-201 (GRGS…TPAR). Positions 219–282 (EEKRRIRRER…NQLEFFLRAH (64 aa)) constitute a bZIP domain. Residues 221–240 (KRRIRRERNKQAAARCRKRR) form a basic motif region. Residues 247–275 (LTYEVEQLEKKRDGLKKEMETLTDVKNQL) form a leucine-zipper region. 2 disordered regions span residues 311–390 (AGSC…PMST) and 493–529 (DGGT…LVSL). Positions 315-332 (DSGSSSHHNNNSNDSSNG) are enriched in low complexity. The segment covering 340–350 (SLNSTGRSNSP) has biased composition (polar residues). Ser349 carries the post-translational modification Phosphoserine. Over residues 363-375 (DGGLDSSCLLDQD) the composition is skewed to low complexity. A compositionally biased stretch (pro residues) spans 376 to 387 (GPPPSKRFPLPP).

This sequence belongs to the bZIP family. Fos subfamily. In terms of assembly, homodimer. Heterodimer with Jra. The kay-Jra heterodimer binds more stably to the AP-1 site than either of the two proteins alone.

It is found in the nucleus. In terms of biological role, developmentally regulated transcription factor AP-1 binds and recognizes the enhancer DNA sequence: 5'-TGA[CG]TCA-3'. May play a role in the function or determination of a particular subset of cells in the developing embryo. Is able to carry out its function either independently of or in conjunction with Jra. The chain is Transcription factor kayak from Drosophila ananassae (Fruit fly).